A 212-amino-acid chain; its full sequence is Major fimbrial subunit (212 aa).

A signal peptide spans 1 to 18 (MKKTLLGSLILLAFATNA). Cys-42 and Cys-82 form a disulfide bridge.

The protein belongs to the fimbrial protein family.

It localises to the fimbrium. Its function is as follows. Mediates adherence to oropharyngeal epithelial cells. Helps the airway colonization process. The protein is Major fimbrial subunit (hifA) of Haemophilus influenzae.